The following is a 142-amino-acid chain: HTH-type transcriptional regulator MntR (142 aa).

In terms of domain architecture, HTH dtxR-type spans 1–63; that stretch reads MTTPSMEDYI…YEKYRGLVLT (63 aa). Residues Asp-8, Glu-11, His-77, Glu-99, Glu-102, and His-103 each coordinate Mn(2+).

This sequence belongs to the DtxR/MntR family. Homodimer.

The protein resides in the cytoplasm. With respect to regulation, DNA binding is strongly activated by Mn(2+). Its function is as follows. Central regulator of manganese homeostasis. This chain is HTH-type transcriptional regulator MntR, found in Bacillus velezensis (strain DSM 23117 / BGSC 10A6 / LMG 26770 / FZB42) (Bacillus amyloliquefaciens subsp. plantarum).